The chain runs to 142 residues: Hemoglobin subunit alpha (142 aa).

The region spanning 2-142 is the Globin domain; the sequence is VLSAADKTNV…VSTVLTSKYR (141 aa). Serine 4 is modified (phosphoserine). Position 8 is an N6-succinyllysine (lysine 8). Residue threonine 9 is modified to Phosphothreonine. Residue lysine 12 is modified to N6-succinyllysine. N6-acetyllysine; alternate is present on lysine 17. Lysine 17 carries the N6-succinyllysine; alternate modification. An N6-succinyllysine modification is found at lysine 41. The residue at position 50 (serine 50) is a Phosphoserine. Histidine 59 contributes to the O2 binding site. Histidine 88 is a binding site for heme b. Serine 103 carries the phosphoserine modification. Residue threonine 109 is modified to Phosphothreonine. A phosphoserine mark is found at serine 125 and serine 132. Threonine 135 and threonine 138 each carry phosphothreonine. Residue serine 139 is modified to Phosphoserine.

This sequence belongs to the globin family. As to quaternary structure, heterotetramer of two alpha chains and two beta chains. In terms of tissue distribution, red blood cells.

Involved in oxygen transport from the lung to the various peripheral tissues. In terms of biological role, hemopressin acts as an antagonist peptide of the cannabinoid receptor CNR1. Hemopressin-binding efficiently blocks cannabinoid receptor CNR1 and subsequent signaling. The chain is Hemoglobin subunit alpha (HBA) from Equus przewalskii (Przewalski's horse).